A 365-amino-acid chain; its full sequence is Histidinol-phosphate aminotransferase (365 aa).

N6-(pyridoxal phosphate)lysine is present on Lys222.

The protein belongs to the class-II pyridoxal-phosphate-dependent aminotransferase family. Histidinol-phosphate aminotransferase subfamily. In terms of assembly, homodimer. Requires pyridoxal 5'-phosphate as cofactor.

The catalysed reaction is L-histidinol phosphate + 2-oxoglutarate = 3-(imidazol-4-yl)-2-oxopropyl phosphate + L-glutamate. It participates in amino-acid biosynthesis; L-histidine biosynthesis; L-histidine from 5-phospho-alpha-D-ribose 1-diphosphate: step 7/9. The protein is Histidinol-phosphate aminotransferase of Geobacillus thermodenitrificans (strain NG80-2).